A 181-amino-acid polypeptide reads, in one-letter code: ATP synthase subunit delta (181 aa).

It belongs to the ATPase delta chain family. F-type ATPases have 2 components, F(1) - the catalytic core - and F(0) - the membrane proton channel. F(1) has five subunits: alpha(3), beta(3), gamma(1), delta(1), epsilon(1). F(0) has three main subunits: a(1), b(2) and c(10-14). The alpha and beta chains form an alternating ring which encloses part of the gamma chain. F(1) is attached to F(0) by a central stalk formed by the gamma and epsilon chains, while a peripheral stalk is formed by the delta and b chains.

The protein localises to the cell membrane. F(1)F(0) ATP synthase produces ATP from ADP in the presence of a proton or sodium gradient. F-type ATPases consist of two structural domains, F(1) containing the extramembraneous catalytic core and F(0) containing the membrane proton channel, linked together by a central stalk and a peripheral stalk. During catalysis, ATP synthesis in the catalytic domain of F(1) is coupled via a rotary mechanism of the central stalk subunits to proton translocation. In terms of biological role, this protein is part of the stalk that links CF(0) to CF(1). It either transmits conformational changes from CF(0) to CF(1) or is implicated in proton conduction. This is ATP synthase subunit delta from Priestia megaterium (strain ATCC 12872 / QMB1551) (Bacillus megaterium).